A 691-amino-acid polypeptide reads, in one-letter code: Elongation factor G (691 aa).

The tr-type G domain occupies 8-283 (KKVRNIGIAA…AVVAYLPAPD (276 aa)). GTP is bound by residues 17–24 (AHIDAGKT), 81–85 (DTPGH), and 135–138 (NKMD).

The protein belongs to the TRAFAC class translation factor GTPase superfamily. Classic translation factor GTPase family. EF-G/EF-2 subfamily.

The protein resides in the cytoplasm. Functionally, catalyzes the GTP-dependent ribosomal translocation step during translation elongation. During this step, the ribosome changes from the pre-translocational (PRE) to the post-translocational (POST) state as the newly formed A-site-bound peptidyl-tRNA and P-site-bound deacylated tRNA move to the P and E sites, respectively. Catalyzes the coordinated movement of the two tRNA molecules, the mRNA and conformational changes in the ribosome. In Campylobacter jejuni subsp. jejuni serotype O:23/36 (strain 81-176), this protein is Elongation factor G.